A 372-amino-acid polypeptide reads, in one-letter code: Mitogen-activated protein kinase homolog NTF3 (372 aa).

A Protein kinase domain is found at 32–319 (YVPIKPIGRG…VIEALQHPYM (288 aa)). ATP contacts are provided by residues 38-46 (IGRGAYGIV) and Lys-61. Catalysis depends on Asp-158, which acts as the Proton acceptor. Thr-191 is subject to Phosphothreonine. The TXY motif lies at 191 to 193 (TEY). A Phosphotyrosine modification is found at Tyr-193.

This sequence belongs to the protein kinase superfamily. CMGC Ser/Thr protein kinase family. MAP kinase subfamily. Mg(2+) serves as cofactor. Dually phosphorylated on Thr-191 and Tyr-193, which activates the enzyme. Very low autophosphorylation, although dramatically increased when Mn(2+) is added to the reaction instead of Mg(2+). As to expression, ubiquitous.

It catalyses the reaction L-seryl-[protein] + ATP = O-phospho-L-seryl-[protein] + ADP + H(+). It carries out the reaction L-threonyl-[protein] + ATP = O-phospho-L-threonyl-[protein] + ADP + H(+). With respect to regulation, activated by tyrosine and threonine phosphorylation. The protein is Mitogen-activated protein kinase homolog NTF3 (NTF3) of Nicotiana tabacum (Common tobacco).